A 198-amino-acid polypeptide reads, in one-letter code: MAKVLVLYYSMYGHIETMARAVAEGASKVDGAEVIVKRVPETMPPQLFEKAGGKTQTAPVATPQELADYDAIIFGTPTRFGNMSGQMRTFLDQTGGLWASGALYGKLASVFSSTGTGGGQEQTITSTWTTLAHHGMVIVPIGYAAQELFDVSQVRGGTPYGATTIAGGDGSRQPSQEELSIARYQGEYVAGLAVKLNG.

Residues valine 4 to valine 189 enclose the Flavodoxin-like domain. FMN-binding positions include serine 10 to isoleucine 15 and threonine 78 to phenylalanine 80. Tyrosine 12 serves as a coordination point for NAD(+). Tryptophan 98 contributes to the substrate binding site. FMN is bound by residues serine 113 to glycine 118 and histidine 133.

It belongs to the WrbA family. Requires FMN as cofactor.

The enzyme catalyses a quinone + NADH + H(+) = a quinol + NAD(+). The catalysed reaction is a quinone + NADPH + H(+) = a quinol + NADP(+). This Escherichia fergusonii (strain ATCC 35469 / DSM 13698 / CCUG 18766 / IAM 14443 / JCM 21226 / LMG 7866 / NBRC 102419 / NCTC 12128 / CDC 0568-73) protein is NAD(P)H dehydrogenase (quinone).